A 249-amino-acid polypeptide reads, in one-letter code: Olfactory receptor 1571 (249 aa).

The chain crosses the membrane as a helical span at residues 1–9 (LLMCNLCFA). Residues 10 to 40 (DICFTSASIPTNLVNIQTKNKVITYEGCISQ) lie on the Extracellular side of the membrane. A disulfide bond links cysteine 37 and cysteine 119. A helical membrane pass occupies residues 41–60 (VYFFILFGVLDNFLLAVMAY). Over 61–82 (DRYVAICHPLHYTVIMNRRLCG) the chain is Cytoplasmic. A helical transmembrane segment spans residues 83 to 103 (LLVLGSWVTTALNSLLQSSMA). The Extracellular portion of the chain corresponds to 104–136 (LRLSFCTDLKIPHFVCELNQLVLLACNDTFPND). An N-linked (GlcNAc...) asparagine glycan is attached at asparagine 130. The helical transmembrane segment at 137-158 (MVMYFAAVLLGGGPLAGILYSY) threads the bilayer. The Cytoplasmic portion of the chain corresponds to 159-180 (SKIVSSIRAISSSQGKYKAFST). The chain crosses the membrane as a helical span at residues 181–200 (CASHLSVVSLFYSTLLGVYL). Over 201–210 (SSSFTQNSHS) the chain is Extracellular. The chain crosses the membrane as a helical span at residues 211–232 (TARASVMYSVVTPMLNPFIYSL). Residues 233–249 (RNKDLMGALRRLFRRKP) lie on the Cytoplasmic side of the membrane.

It belongs to the G-protein coupled receptor 1 family. As to expression, tongue specific.

It localises to the cell membrane. In terms of biological role, possible taste receptor. This is Olfactory receptor 1571 (Olr1571) from Rattus norvegicus (Rat).